The primary structure comprises 917 residues: Translation initiation factor IF-2 (917 aa).

2 disordered regions span residues 1 to 84 and 150 to 318; these read MSDG…GRAG and KESE…DRER. Residues 10-27 show a composition bias toward polar residues; that stretch reads DGNNTPSQGGEQTRSSRL. Composition is skewed to low complexity over residues 69–84, 154–177, and 227–236; these read AAGPGAGAAARGGRAG, QQAAREQAAAEAAARAAEQAAAEA, and SRPAAAAPAR. The span at 265–274 shows a compositional bias: pro residues; it reads GAPPAPPRRP. A compositionally biased stretch (basic and acidic residues) spans 282–305; the sequence is GGSDRRSGRIDVRAAIEGDDDKTR. In terms of domain architecture, tr-type G spans 416-586; the sequence is PRAPVVTVMG…LLQSEMLDLK (171 aa). The interval 425 to 432 is G1; sequence GHVDHGKT. GTP is bound at residue 425–432; that stretch reads GHVDHGKT. The G2 stretch occupies residues 450–454; it reads GITQH. Residues 472 to 475 are G3; that stretch reads DTPG. Residues 472–476 and 526–529 each bind GTP; these read DTPGH and NKID. Residues 526–529 are G4; that stretch reads NKID. The G5 stretch occupies residues 562 to 564; the sequence is SAL.

The protein belongs to the TRAFAC class translation factor GTPase superfamily. Classic translation factor GTPase family. IF-2 subfamily.

The protein resides in the cytoplasm. Functionally, one of the essential components for the initiation of protein synthesis. Protects formylmethionyl-tRNA from spontaneous hydrolysis and promotes its binding to the 30S ribosomal subunits. Also involved in the hydrolysis of GTP during the formation of the 70S ribosomal complex. This Gluconobacter oxydans (strain 621H) (Gluconobacter suboxydans) protein is Translation initiation factor IF-2.